Here is an 845-residue protein sequence, read N- to C-terminus: Disintegrin and metalloproteinase domain-containing protein 9 (845 aa).

The signal sequence occupies residues 1 to 29; sequence MGPRALSPLASLRLRWLLACGLLGPVLEA. The Extracellular segment spans residues 30–697; the sequence is GRPDLEQTVH…YNAKSTALRD (668 aa). N-linked (GlcNAc...) asparagine glycosylation is found at asparagine 144, asparagine 154, and asparagine 231. The region spanning 212-406 is the Peptidase M12B domain; the sequence is RYVELFIVVD…KGGSCLLNIP (195 aa). Cystine bridges form between cysteine 322-cysteine 401, cysteine 363-cysteine 385, cysteine 365-cysteine 370, and cysteine 473-cysteine 493. A Zn(2+)-binding site is contributed by histidine 347. Residue glutamate 348 is part of the active site. Zn(2+) is bound by residues histidine 351 and histidine 357. N-linked (GlcNAc...) asparagine glycosylation is found at asparagine 381, asparagine 487, and asparagine 636. The 88-residue stretch at 414 to 501 folds into the Disintegrin domain; sequence APSCGNKLVD…FCPPDVFIQN (88 aa). 3 disulfides stabilise this stretch: cysteine 644–cysteine 656, cysteine 650–cysteine 662, and cysteine 664–cysteine 673. One can recognise an EGF-like domain in the interval 644-698; sequence CDIQGKCHGHGVCNSNKNCHCEDGWAPPHCDTKGYGGSVDSGPTYNAKSTALRDG. Residues 698–718 form a helical membrane-spanning segment; the sequence is GLLVFFFLIVPLVAAAIFLFI. Residues 719 to 845 lie on the Cytoplasmic side of the membrane; sequence KRDELRKTFR…PAPPLYSSLT (127 aa). Residues 729-845 form a disordered region; it reads KKRSQMSDGR…PAPPLYSSLT (117 aa). Residues 734–745 show a composition bias toward polar residues; that stretch reads MSDGRNQANVSR. The segment covering 783–794 has biased composition (pro residues); sequence PGGPGVSRPPPG.

In terms of assembly, interacts with SH3GL2 and SNX9 through its cytoplasmic tail. Interacts with ITGA6. It depends on Zn(2+) as a cofactor. In terms of processing, proteolytically cleaved in the trans-Golgi network before it reaches the plasma membrane to generate a mature protein. The removal of the pro-domain occurs via cleavage at two different sites. Processed most likely by a pro-protein convertase such as furin, at the boundary between the pro-domain and the catalytic domain. An additional upstream cleavage pro-protein convertase site (Arg-56/Glu-57) has an important role in the activation of ADAM9. Phosphorylation is induced in vitro by phorbol-12-myristate-13-acetate (PMA).

Its subcellular location is the cell membrane. With respect to regulation, synthesized as an inactive form which is proteolytically cleaved to generate an active enzyme. Processing at the upstream site is particularly important for activation of the proenzyme, whereas processing at the boundary between the pro-domain and the catalytic domain does not appear to be essential. Inhibited by hydroxamic acid-based inhibitors. In terms of biological role, metalloprotease that cleaves and releases a number of molecules with important roles in tumorigenesis and angiogenesis, such as TEK, KDR, EPHB4, CD40, VCAM1 and CDH5. May mediate cell-cell, cell-matrix interactions and regulate the motility of cells via interactions with integrins. This Mus musculus (Mouse) protein is Disintegrin and metalloproteinase domain-containing protein 9.